A 519-amino-acid polypeptide reads, in one-letter code: AarF domain-containing protein kinase 1 (519 aa).

The Protein kinase domain maps to 145-481; it reads SFEDTPLGAA…SLYRRVHISL (337 aa). ATP-binding positions include 151–159 and Lys173; that span reads LGAASLAQV. The active-site Proton acceptor is Asp305.

This sequence belongs to the protein kinase superfamily. ADCK protein kinase family.

The protein localises to the mitochondrion. Appears to be essential for maintaining mitochondrial cristae formation and mitochondrial function by acting via YME1L1 in a kinase-independent manner to regulate essential mitochondrial structural proteins OPA1 and IMMT. The action of this enzyme is not yet clear. It is not known if it has protein kinase activity and what type of substrate it would phosphorylate (Ser, Thr or Tyr). The polypeptide is AarF domain-containing protein kinase 1 (ADCK1) (Gallus gallus (Chicken)).